We begin with the raw amino-acid sequence, 438 residues long: Transposon Ty2-B Gag polyprotein (438 aa).

Composition is skewed to polar residues over residues 1-11 (MESQQLHQNPH), 19-39 (ASVT…SASN), and 49-60 (KVNSQQETTPGT). Disordered stretches follow at residues 1–88 (MESQ…YQQH), 364–397 (KNVS…AKAH), and 419–438 (SSQY…TERI). The tract at residues 295 to 397 (ENNINVSDRL…SSKPRAAKAH (103 aa)) is RNA-binding. The span at 369 to 381 (TSPNTTNTKVTTR) shows a compositional bias: low complexity.

In terms of assembly, homotrimer.

Its subcellular location is the cytoplasm. Capsid protein (CA) is the structural component of the virus-like particle (VLP), forming the shell that encapsulates the retrotransposons dimeric RNA genome. The particles are assembled from trimer-clustered units and there are holes in the capsid shells that allow for the diffusion of macromolecules. CA also has nucleocapsid-like chaperone activity, promoting primer tRNA(i)-Met annealing to the multipartite primer-binding site (PBS), dimerization of Ty2 RNA and initiation of reverse transcription. The protein is Transposon Ty2-B Gag polyprotein (TY2A-B) of Saccharomyces cerevisiae (strain ATCC 204508 / S288c) (Baker's yeast).